Reading from the N-terminus, the 434-residue chain is Nucleobase transporter PlUacP (434 aa).

Helical transmembrane passes span 9-29 (LGFQHVLAMYAGAVIVPLIVG), 39-59 (LAYLVSIDLLTCGIATLLQVW), 63-83 (FFGIGLPVMLGCTFTAVGPMI), 93-113 (AIYGSVLASGLFLALFAGFFG), 118-138 (FFPPIVTGSVVTIIGITLIPV), 159-179 (ALSFGVLLFIILANRFFTGFI), 181-201 (AISILLGLIFGTIAGAFMGKV), 218-238 (FYFGFPTFHLPSILTMTLVAI), 306-326 (VVITAGFILVILGFMPKIAAL), 327-347 (TLLIPTAVLGGAMIAMFGMVV), 365-385 (LLIIACSVSVGLGVTVAPNLF), and 394-414 (ILTSNGIVAGSLTAILMNFLF).

This sequence belongs to the nucleobase:cation symporter-2 (NCS2) (TC 2.A.40) family.

It is found in the cell membrane. With respect to regulation, inhibited by the proton gradient disruptor carbonyl cyanide m-chlorophenylhydrazone (CCCP), but not by the sodium gradient disruptor ouabain. Hypoxanthine, xanthine, cytosine and uric acid act as competitive inhibitors. In terms of biological role, uptake of the purines adenine and guanine, and the pyrimidine uracil. Transport is probably proton-dependent. The sequence is that of Nucleobase transporter PlUacP from Paenibacillus larvae subsp. larvae (strain NRRL B-3650 / LMG 16245).